We begin with the raw amino-acid sequence, 578 residues long: Hemolysin 4 (578 aa).

Positions 289-322 are disordered; that stretch reads KDGPKASWRRRPSSASSVTMPTTPRIIGSNARPE. One can recognise a Ricin B-type lectin domain in the interval 448–539; sequence RPVNLQLGGF…LSNLSAHQLL (92 aa).

Belongs to the HlyA hemolysin family.

Bacterial hemolysins are exotoxins that attack blood cell membranes and cause cell rupture by mechanisms not clearly defined. In Aeromonas salmonicida, this protein is Hemolysin 4 (ash4).